The chain runs to 256 residues: Glucanase inhibitor protein 2 (256 aa).

A signal peptide spans methionine 1–glycine 15. In terms of domain architecture, Peptidase S1 spans isoleucine 27–lysine 254. A disulfide bridge links cysteine 54 with cysteine 70. Asparagine 87, asparagine 102, asparagine 107, and asparagine 157 each carry an N-linked (GlcNAc...) asparagine glycan. Disulfide bonds link cysteine 177–cysteine 189 and cysteine 199–cysteine 230.

The protein belongs to the peptidase S1 family. As to quaternary structure, forms an apoplastic complex with host endoglucanases in tomato leaves during P.infestans infection.

It localises to the secreted. Functionally, secreted effector that suppresses host plant glucan elicitor-mediated defense responses. Targets host endoglucanases and inhibits the endoglucanase-mediated release of elicitor-active glucan oligosaccharides from P.infestans cell walls. The sequence is that of Glucanase inhibitor protein 2 from Phytophthora infestans (Potato late blight agent).